The primary structure comprises 1546 residues: DNA-directed RNA polymerase subunit beta' (1546 aa).

Positions 57, 59, 72, and 75 each coordinate Zn(2+). The Mg(2+) site is built by D756, D758, and D760. The Zn(2+) site is built by C1130, C1211, C1218, and C1221. The disordered stretch occupies residues 1512-1546 (LEKYGEGSTSSDAVTGGQRYDDTRPGSSINPGYGD). The segment covering 1536–1546 (PGSSINPGYGD) has biased composition (polar residues).

The protein belongs to the RNA polymerase beta' chain family. As to quaternary structure, the RNAP catalytic core consists of 2 alpha, 1 beta, 1 beta' and 1 omega subunit. When a sigma factor is associated with the core the holoenzyme is formed, which can initiate transcription. The cofactor is Mg(2+). Zn(2+) is required as a cofactor.

It carries out the reaction RNA(n) + a ribonucleoside 5'-triphosphate = RNA(n+1) + diphosphate. DNA-dependent RNA polymerase catalyzes the transcription of DNA into RNA using the four ribonucleoside triphosphates as substrates. The sequence is that of DNA-directed RNA polymerase subunit beta' from Deinococcus radiodurans (strain ATCC 13939 / DSM 20539 / JCM 16871 / CCUG 27074 / LMG 4051 / NBRC 15346 / NCIMB 9279 / VKM B-1422 / R1).